The following is a 3623-amino-acid chain: Cubilin (3623 aa).

The N-terminal stretch at 1–20 is a signal peptide; the sequence is MSSQFLWGFVTLLMIAELDG. The propeptide at 21 to 32 is removed in mature form; that stretch reads KTGKPEQRGQKR. Residues 39–46 form an interaction with AMN region; that stretch reads PRMTTEEG. An N-linked (GlcNAc...) asparagine glycan is attached at Asn-95. The region spanning 129–165 is the EGF-like 1 domain; that stretch reads ERKVCSSNPCLNGGTCVNLHDSFVCICPSQWKGLFCS. Intrachain disulfides connect Cys-133–Cys-144, Cys-138–Cys-153, Cys-155–Cys-164, Cys-171–Cys-187, Cys-181–Cys-196, Cys-198–Cys-207, Cys-264–Cys-277, Cys-271–Cys-286, and Cys-289–Cys-300. One can recognise an EGF-like 2; calcium-binding domain in the interval 167 to 208; sequence DVNECVVYSGTPFGCQSGSTCVNTVGSFRCDCTPDTYGPQCA. The EGF-like 3; calcium-binding domain maps to 260–301; sequence DKDECSLQPSPCSEHAQCFNTQGSFYCGACPKGWQGNGYECQ. The EGF-like 4; calcium-binding domain occupies 302 to 345; it reads DINECEINNGGCSQAPLVPCLNTPGSFSCGNCPAGFSGDGRVCT. EGF-like domains lie at 346-385 and 395-430; these read PVDICSIHNGGCHPEATCSSSPVLGSFLPVCTCPPGYTGN and LSNICSRHPCVNGQCIETVSSYFCKCDSGWSGQNCT. 13 disulfide bridges follow: Cys-350/Cys-363, Cys-357/Cys-376, Cys-399/Cys-409, Cys-404/Cys-418, Cys-420/Cys-429, Cys-436/Cys-447, Cys-441/Cys-456, Cys-458/Cys-467, Cys-474/Cys-500, Cys-527/Cys-549, Cys-590/Cys-616, Cys-643/Cys-665, and Cys-708/Cys-734. Asn-428 carries an N-linked (GlcNAc...) asparagine glycan. In terms of domain architecture, EGF-like 7; calcium-binding spans 432 to 468; the sequence is NINDCSSNPCLNGGTCIDGINGFTCDCTSSWTGYYCQ. 27 CUB domains span residues 474-586, 590-702, 708-816, 817-928, 932-1042, 1048-1161, 1165-1277, 1278-1389, 1391-1506, 1510-1619, 1620-1734, 1738-1850, 1852-1963, 1978-2091, 2092-2213, 2217-2334, 2336-2448, 2452-2565, 2570-2687, 2689-2801, 2805-2919, 2920-3035, 3037-3150, 3157-3274, 3278-3393, 3395-3507, and 3511-3623; these read CGGI…WEAK, CGGI…YLTT, CGGN…YQVA, CGGM…FSSD, CGEV…YEAI, CLYD…WDGS, CGGN…FRQR, CDNV…WFTH, CGGE…WRAV, CGGI…FREE, CGGR…YSAS, CGGS…FKNI, GNNN…WFAV, CGGF…FHKS, CGGY…YEAK, CGGT…YSIA, CGGT…FKSS, CGGD…YTST, CGGF…YSFT, CGGI…WTTN, CGGT…FISR, CGRT…YRAI, CGGI…FRET, CGGY…YTFV, CGGT…YQIA, CNRE…WTSS, and CGGT…MWSS. Asn-491 carries N-linked (GlcNAc...) asparagine glycosylation. N-linked (GlcNAc...) asparagine glycosylation is found at Asn-711 and Asn-749. Cys-761 and Cys-779 are oxidised to a cystine. Asn-781 carries an N-linked (GlcNAc...) asparagine glycan. A disulfide bridge connects residues Cys-817 and Cys-842. The N-linked (GlcNAc...) asparagine glycan is linked to Asn-857. Intrachain disulfides connect Cys-869/Cys-891 and Cys-932/Cys-958. A glycan (N-linked (GlcNAc...) asparagine) is linked at Asn-957. Position 980 (Glu-980) interacts with Ca(2+). Residue Asn-984 is glycosylated (N-linked (GlcNAc...) asparagine). Cysteines 985 and 1005 form a disulfide. Residues Asp-988, Asp-1027, and Leu-1030 each coordinate Ca(2+). Cys-1048 and Cys-1074 are joined by a disulfide. Residues Glu-1096, Asp-1105, and Asp-1146 each coordinate Ca(2+). A disulfide bridge links Cys-1165 with Cys-1191. An N-linked (GlcNAc...) asparagine glycan is attached at Asn-1168. Ca(2+) contacts are provided by Glu-1213, Asp-1221, Asp-1262, Gly-1264, and Gln-1265. Residues Cys-1218 and Cys-1240 are joined by a disulfide bond. The cysteines at positions 1278 and 1306 are disulfide-linked. Residues Asn-1285, Asn-1307, and Asn-1319 are each glycosylated (N-linked (GlcNAc...) asparagine). Residue Glu-1328 participates in Ca(2+) binding. Asn-1332 carries an N-linked (GlcNAc...) asparagine glycan. Cys-1333 and Cys-1351 are disulfide-bonded. Residues Asp-1336, Asp-1373, and Ile-1375 each coordinate Ca(2+). Cystine bridges form between Cys-1391/Cys-1417 and Cys-1444/Cys-1466. Residue Asn-1500 is glycosylated (N-linked (GlcNAc...) asparagine). An intrachain disulfide couples Cys-1510 to Cys-1536. Residues Asn-1551, Asn-1646, and Asn-1671 are each glycosylated (N-linked (GlcNAc...) asparagine). Cys-1620 and Cys-1647 are joined by a disulfide. 3 cysteine pairs are disulfide-bonded: Cys-1675–Cys-1697, Cys-1738–Cys-1764, and Cys-1791–Cys-1812. N-linked (GlcNAc...) asparagine glycosylation is found at Asn-1802 and Asn-1819. 3 disulfides stabilise this stretch: Cys-1905–Cys-1927, Cys-1978–Cys-2006, and Cys-2032–Cys-2054. N-linked (GlcNAc...) asparagine glycans are attached at residues Asn-2085 and Asn-2117. Disulfide bonds link Cys-2092–Cys-2118 and Cys-2217–Cys-2247. N-linked (GlcNAc...) asparagine glycosylation occurs at Asn-2274. 5 cysteine pairs are disulfide-bonded: Cys-2275–Cys-2297, Cys-2336–Cys-2363, Cys-2390–Cys-2411, Cys-2452–Cys-2478, and Cys-2505–Cys-2527. An N-linked (GlcNAc...) asparagine glycan is attached at Asn-2400. Asn-2531, Asn-2581, and Asn-2610 each carry an N-linked (GlcNAc...) asparagine glycan. Cys-2570 and Cys-2599 are oxidised to a cystine. 7 disulfide bridges follow: Cys-2628/Cys-2649, Cys-2689/Cys-2715, Cys-2742/Cys-2764, Cys-2805/Cys-2831, Cys-2860/Cys-2883, Cys-2920/Cys-2946, and Cys-2977/Cys-2999. N-linked (GlcNAc...) asparagine glycans are attached at residues Asn-2813, Asn-2875, Asn-2945, and Asn-2989. Thr-3008 is modified (phosphothreonine). Cystine bridges form between Cys-3037/Cys-3064 and Cys-3091/Cys-3113. 4 N-linked (GlcNAc...) asparagine glycosylation sites follow: Asn-3042, Asn-3106, Asn-3125, and Asn-3165. 2 cysteine pairs are disulfide-bonded: Cys-3157/Cys-3185 and Cys-3215/Cys-3237. 3 N-linked (GlcNAc...) asparagine glycosylation sites follow: Asn-3268, Asn-3283, and Asn-3290. 2 disulfides stabilise this stretch: Cys-3278/Cys-3306 and Cys-3332/Cys-3354. N-linked (GlcNAc...) asparagine glycosylation is found at Asn-3357, Asn-3400, and Asn-3430. The cysteines at positions 3395 and 3421 are disulfide-linked. 3 cysteine pairs are disulfide-bonded: Cys-3448–Cys-3470, Cys-3511–Cys-3537, and Cys-3564–Cys-3586. Asn-3533 is a glycosylation site (N-linked (GlcNAc...) asparagine).

Interacts with AMN. Component of the cubam complex composed of one CUBN trimer and one AMN chain. The cubam complex can dimerize. Interacts with LRP2 in a dual-receptor complex in a calcium-dependent manner. Found in a complex with PID1/PCLI1, LRP1 and CUBNI. Interacts with LRP1 and PID1/PCLI1. Post-translationally, the precursor is cleaved by a trans-Golgi proteinase furin, removing a propeptide. N-glycosylated. In terms of tissue distribution, expressed to intestinal, renal and yalk sac apical membranes. In kidney, expressed in the proximal tubule.

It localises to the cell membrane. It is found in the endosome membrane. The protein localises to the lysosome membrane. In terms of biological role, endocytic receptor which plays a role in lipoprotein, vitamin and iron metabolism by facilitating their uptake. Acts together with LRP2 to mediate endocytosis of high-density lipoproteins, GC, hemoglobin, ALB, TF and SCGB1A1. Acts together with AMN to mediate endocytosis of the CBLIF-cobalamin complex. Binds to ALB, MB, Kappa and lambda-light chains, TF, hemoglobin, GC, SCGB1A1, APOA1, high density lipoprotein, and the CBLIF-cobalamin complex. Ligand binding requires calcium. Serves as important transporter in several absorptive epithelia, including intestine, renal proximal tubules and embryonic yolk sac. May play an important role in the development of the peri-implantation embryo through internalization of APOA1 and cholesterol. Binds to LGALS3 at the maternal-fetal interface. This chain is Cubilin (Cubn), found in Rattus norvegicus (Rat).